Reading from the N-terminus, the 187-residue chain is Isopentenyl-diphosphate Delta-isomerase (187 aa).

H36, H43, and H80 together coordinate Mn(2+). Positions 41 to 178 (VRHRAFTALL…RQLRLCPWFE (138 aa)) constitute a Nudix hydrolase domain. Position 98 (E98) interacts with Mg(2+). Residues E127 and E129 each coordinate Mn(2+). The active site involves E129.

This sequence belongs to the IPP isomerase type 1 family. The cofactor is Mg(2+). Mn(2+) serves as cofactor.

It localises to the cytoplasm. It carries out the reaction isopentenyl diphosphate = dimethylallyl diphosphate. Its pathway is isoprenoid biosynthesis; dimethylallyl diphosphate biosynthesis; dimethylallyl diphosphate from isopentenyl diphosphate: step 1/1. Functionally, catalyzes the 1,3-allylic rearrangement of the homoallylic substrate isopentenyl (IPP) to its highly electrophilic allylic isomer, dimethylallyl diphosphate (DMAPP). This Haloarcula marismortui (strain ATCC 43049 / DSM 3752 / JCM 8966 / VKM B-1809) (Halobacterium marismortui) protein is Isopentenyl-diphosphate Delta-isomerase.